The chain runs to 1463 residues: MSSAVGPRGPRPPTVPPPMQELPDLSHLTEEERNIIMAVMDRQKEEEEKEEAMLKCVVRDMAKPAACKTPRNAESQPHQPPLNIFRCVCVPRKPSSEEGGPDRNWRLHQQFESYKEQVRKIGEEARRYQGEHKDDAPTCGICHKTKFADGCGHLCSYCRTKFCARCGGRVSLRSNNEDKVVMWVCNLCRKQQEILTKSGAWFFGSGPQQPSQDGTLSDTATGAGSEVPREKKARLQERSRSQTPLSTAAVSSQDTASHGAPLDRNKGAEPSQQALGPEQKQASRSRSEPPRERKKAPGLSEQNGKGGQKSERKRVPKSVVQPGEGTADERERKERRETRRLEKGRSQDYPDRLEKREDGRVAEDEKQRKEEEGVSTPEYTSCEDVELESESVSEKGDLDYWLDPATWHSRETSPISSHPVTWQPSKEGDRLIGRVILNKRTTMPKESGALLGLKVVGGKMTDLGRLGAFITKVKKGSLADVVGHLRAGDEVLEWNGKPLPGATNEEVYNIILESKSEPQVEIIVSRPIGDIPRIPESSHPPLESSSSSFESQKMERPSISVISPTSPGALKDAPQVLPGQLSVKLWYDKVGHQLIVNVLQATDLPPRVDGRPRNPYVKMYFLPDRSDKSKRRTKTVKKLLEPKWNQTFVYSHVHRRDFRERMLEITVWDQPRVQDEESEFLGEILIELETALLDDEPHWYKLQTHDESSLPLPQPSPFMPRRHIHGESSSKKLQRSQRISDSDISDYEVDDGIGVVPPVGYRASARESKATTLTVPEQQRTTHHRSRSVSPHRGDDQGRPRSRLPNVPLQRSLDEIHPTRRSRSPTRHHDASRSLADHRSRHAESQYSSEPDSELLMLPRAKRGRSAECLHMTSELQPSLDRARSASTNCLRPDTSLHSPERERGRWSPSLARRRPASPRIQIQHASPENDRHSRKSERSSIQKQSRKGTASDADRVLPPCLSRRGYAIPRATDQPVIRGKHTTRSRSSEHSSIRTLCSMHHLAPGGSAPPSPLLTRTHRQGSPTQSPPADTSFGSRRGRQLPQVPVRSGSIEQASLVVEERTRQMKMKVHRFKQTTGSGSSQELDHEQYSKYNIHKDQYRSCDNASAKSSDSDVSDVSAISRASSTSRLSSTSFMSEQSERPRGRISSFTPKMQGRRMGTSGRAIIKSTSVSGEIYTLEHNDGSQSDTAVGTVGAGGKKRRSSLSAKVVAIVSRRSRSTSQLSQTESGHKKLKSTIQRSTETGMAAEMRKMVRQPSRESTDGSINSYSSEGNLIFPGVRVGPDSQFSDFLDGLGPAQLVGRQTLATPAMGDIQIGMEDKKGQLEVEVIRARSLTQKPGSKSTPAPYVKVYLLENGACIAKKKTRIARKTLDPLYQQSLVFDESPQGKVLQVIVWGDYGRMDHKCFMGVAQILLEELDLSSMVIGWYKLFPPSSLVDPTLTPLTRRASQSSLESSSGPPCIRS.

The segment at 1 to 26 (MSSAVGPRGPRPPTVPPPMQELPDLS) is disordered. Residues 9–20 (GPRPPTVPPPMQ) are compositionally biased toward pro residues. Positions 22–205 (LPDLSHLTEE…TKSGAWFFGS (184 aa)) constitute a RabBD domain. An FYVE-type zinc finger spans residues 133 to 193 (KDDAPTCGIC…VCNLCRKQQE (61 aa)). C139, C142, C155, C158, C163, C166, C185, and C188 together coordinate Zn(2+). The interval 205-393 (SGPQQPSQDG…DVELESESVS (189 aa)) is disordered. Residues 206-222 (GPQQPSQDGTLSDTATG) are compositionally biased toward polar residues. Positions 227–240 (VPREKKARLQERSR) are enriched in basic and acidic residues. The span at 241–256 (SQTPLSTAAVSSQDTA) shows a compositional bias: polar residues. Over residues 327-372 (ADERERKERRETRRLEKGRSQDYPDRLEKREDGRVAEDEKQRKEEE) the composition is skewed to basic and acidic residues. The segment covering 381–391 (SCEDVELESES) has biased composition (acidic residues). S413 bears the Phosphoserine mark. One can recognise a PDZ domain in the interval 440–526 (RTTMPKESGA…EPQVEIIVSR (87 aa)). Residues 533–567 (RIPESSHPPLESSSSSFESQKMERPSISVISPTSP) form a disordered region. Over residues 535-551 (PESSHPPLESSSSSFES) the composition is skewed to low complexity. Phosphoserine is present on residues S563 and S566. Residues 577–700 (LPGQLSVKLW…ALLDDEPHWY (124 aa)) form the C2 1 domain. The segment at 705–856 (HDESSLPLPQ…YSSEPDSELL (152 aa)) is disordered. A Phosphoserine modification is found at S716. A compositionally biased stretch (polar residues) spans 770 to 779 (ATTLTVPEQQ). At S812 the chain carries Phosphoserine. Residues 827-844 (RHHDASRSLADHRSRHAE) are compositionally biased toward basic and acidic residues. Phosphoserine is present on S866. The segment at 874–1049 (SELQPSLDRA…RQLPQVPVRS (176 aa)) is disordered. Basic and acidic residues predominate over residues 928–941 (PENDRHSRKSERSS). A compositionally biased stretch (polar residues) spans 1021–1035 (QGSPTQSPPADTSFG). S1023 is subject to Phosphoserine. At T1025 the chain carries Phosphothreonine. Phosphoserine occurs at positions 1027, 1079, 1081, 1082, 1110, 1111, and 1113. The segment at 1104-1161 (DNASAKSSDSDVSDVSAISRASSTSRLSSTSFMSEQSERPRGRISSFTPKMQGRRMGT) is disordered. Over residues 1116-1137 (SDVSAISRASSTSRLSSTSFMS) the composition is skewed to low complexity. S1187 is subject to Phosphoserine. Residues 1216-1266 (RSRSTSQLSQTESGHKKLKSTIQRSTETGMAAEMRKMVRQPSRESTDGSIN) form a disordered region. A compositionally biased stretch (basic and acidic residues) spans 1248-1261 (EMRKMVRQPSREST). A C2 2 domain is found at 1309–1427 (AMGDIQIGME…DLSSMVIGWY (119 aa)). A phosphoserine mark is found at S1448, S1451, S1454, and S1463.

Binds SNAP25, SYT1 and CACNA1B. Interaction with SYT1 is enhanced by calcium ions. Interaction with SNAP25 is weaker in the presence of calcium ions. Interacts with TSPOAP1 and RIMBP2; interacts with PPFIA3 and PPFIA4. Interacts with ERC1. Interacts with RAB3A, RAB3B and RAB3D that have been activated by GTP-binding. Interacts with RAB3C, RAB10, RAB26 and RAB37. Binds UNC13A. Phosphorylated by BRSK1.

It localises to the cell membrane. The protein localises to the synapse. It is found in the presynaptic cell membrane. In terms of biological role, rab effector involved in exocytosis. May act as scaffold protein that regulates neurotransmitter release at the active zone. Essential for maintaining normal probability of neurotransmitter release and for regulating release during short-term synaptic plasticity. Plays a role in dendrite formation by melanocytes. This chain is Regulating synaptic membrane exocytosis protein 1 (Rims1), found in Mus musculus (Mouse).